Consider the following 273-residue polypeptide: Dermonecrotic toxin LarSicTox-alphaIB1aiv (273 aa).

The active site involves histidine 5. Glutamate 25 and aspartate 27 together coordinate Mg(2+). Histidine 41 serves as the catalytic Nucleophile. 2 disulfide bridges follow: cysteine 45–cysteine 51 and cysteine 47–cysteine 190. Aspartate 85 provides a ligand contact to Mg(2+). Residue asparagine 250 is glycosylated (N-linked (GlcNAc...) asparagine).

Belongs to the arthropod phospholipase D family. Class II subfamily. Requires Mg(2+) as cofactor. As to expression, expressed by the venom gland.

Its subcellular location is the secreted. It catalyses the reaction an N-(acyl)-sphingosylphosphocholine = an N-(acyl)-sphingosyl-1,3-cyclic phosphate + choline. The catalysed reaction is an N-(acyl)-sphingosylphosphoethanolamine = an N-(acyl)-sphingosyl-1,3-cyclic phosphate + ethanolamine. The enzyme catalyses a 1-acyl-sn-glycero-3-phosphocholine = a 1-acyl-sn-glycero-2,3-cyclic phosphate + choline. It carries out the reaction a 1-acyl-sn-glycero-3-phosphoethanolamine = a 1-acyl-sn-glycero-2,3-cyclic phosphate + ethanolamine. In terms of biological role, dermonecrotic toxins cleave the phosphodiester linkage between the phosphate and headgroup of certain phospholipids (sphingolipid and lysolipid substrates), forming an alcohol (often choline) and a cyclic phosphate. This toxin acts on sphingomyelin (SM). It may also act on ceramide phosphoethanolamine (CPE), lysophosphatidylcholine (LPC) and lysophosphatidylethanolamine (LPE), but not on lysophosphatidylserine (LPS), and lysophosphatidylglycerol (LPG). It acts by transphosphatidylation, releasing exclusively cyclic phosphate products as second products. Induces dermonecrosis, hemolysis, increased vascular permeability, edema, inflammatory response, and platelet aggregation. The protein is Dermonecrotic toxin LarSicTox-alphaIB1aiv of Loxosceles arizonica (Arizona brown spider).